The primary structure comprises 457 residues: MQKYIVEARSLLALAIPVVIAQLSQTAMGVVDTIMAGSVSATDMAAVAVGTSIWLPAILFGHGLLLALTPTVAQLNGSGRRSQIAHQVRQGFWLALCVSVLIMLVLYNSDHVIKQMDNIDPVLAQKAVGFLHAIMWGVPGYLFFQVLRNQCEGLSKTKPGMVIGFVGLLVNIPINYIFIYGKFGAPALGGVGCGVATASVYWVMFLMMRWYVTRARSQQDIKLEKGFAAPDWQVMKRLSGLGLPVALALFFEVTLFAVVALLVSPLGIVAVAGHQIALNFSSLMFMLPMSLSVAATIRVGFRLGQGSVEQAQVAAYTSMAVGLLLASVTAVFTIVFREHIALLYNKTPEVVTMASHLMLLAALYQLSDAVQVIGSGVLRGYKDTRSIFFITFTAYWLLGLPSGYLLGLTDYILPAMGPAGFWIGFIIGLTAAAILMVLRIRWLQKQPTAFILQRAAH.

12 helical membrane-spanning segments follow: residues 11–31 (LLALAIPVVIAQLSQTAMGVV), 46–66 (AVAVGTSIWLPAILFGHGLLL), 93–113 (WLALCVSVLIMLVLYNSDHVI), 127–147 (AVGFLHAIMWGVPGYLFFQVL), 160–180 (GMVIGFVGLLVNIPINYIFIY), 188–208 (LGGVGCGVATASVYWVMFLMM), 243–263 (LPVALALFFEVTLFAVVALLV), 283–301 (LMFMLPMSLSVAATIRVGF), 316–336 (YTSMAVGLLLASVTAVFTIVF), 357–377 (LMLLAALYQLSDAVQVIGSGV), 387–407 (IFFITFTAYWLLGLPSGYLLG), and 418–438 (PAGFWIGFIIGLTAAAILMVL).

The protein belongs to the multi antimicrobial extrusion (MATE) (TC 2.A.66.1) family. MdtK subfamily.

Its subcellular location is the cell inner membrane. Functionally, multidrug efflux pump that functions probably as a Na(+)/drug antiporter. The chain is Multidrug resistance protein MdtK from Yersinia pseudotuberculosis serotype O:1b (strain IP 31758).